Here is a 359-residue protein sequence, read N- to C-terminus: Transcription factor MYB115 (359 aa).

The segment covering 1 to 17 (MYHQNLISSTPNQNSNP) has biased composition (polar residues). The disordered stretch occupies residues 1-21 (MYHQNLISSTPNQNSNPHDWD). 2 consecutive HTH myb-type domains span residues 153-208 (KDII…RPNI) and 209-259 (KKND…RRLH). 2 DNA-binding regions (H-T-H motif) span residues 181–204 (WTSIAKMFQGRVGKQCRERWHNHL) and 232–255 (WTEIAKRLPGRSENIVKNHWNATK).

In terms of tissue distribution, accumulates in reproductive organs (e.g. flowers and siliques). Expressed at very low levels in vegetative organs.

The protein localises to the nucleus. Functionally, transcription activator that recognizes the motif 5'-TAACGG-3' in the promoter of target genes. Promotes vegetative-to-embryonic transition and the formation of somatic embryos from root explants in a WUS-independent manner. Together with MYB118, activates the transcription of S-ACP-DES2/AAD2 and S-ACP-DES3/AAD3 thus promoting the biosynthesis of omega-7 monounsaturated fatty acid in seed endosperm. The polypeptide is Transcription factor MYB115 (Arabidopsis thaliana (Mouse-ear cress)).